The chain runs to 502 residues: Actin-binding protein WASF3 (502 aa).

A coiled-coil region spans residues 57–93 (NEANNFYIRANSLQDRIDRLAVKVTQLDSTVEEVSLQ). A Phosphotyrosine; by ABL1 modification is found at Tyr151. Residues 162–206 (KEKMLQDTEDKRKEKRRQKEQKRIDGTTREVKKVRKARNRRQEWN) adopt a coiled-coil conformation. 2 disordered regions span residues 169–210 (TEDK…MMAY) and 223–443 (SVYH…ARSD). Basic and acidic residues predominate over residues 182–192 (QKRIDGTTREV). The segment covering 223 to 237 (SVYHGASSEGSLSPD) has biased composition (polar residues). Tyr248 carries the post-translational modification Phosphotyrosine; by ABL1. Residues 302-312 (QQPPPPPPPQA) are compositionally biased toward pro residues. Residue Tyr337 is modified to Phosphotyrosine; by ABL1. 2 stretches are compositionally biased toward pro residues: residues 341–352 (SGPPPPPPPPVI) and 394–410 (APPP…PPGP). Low complexity predominate over residues 411–423 (GSSLSSSPMHGPP). A WH2 domain is found at 440–457 (ARSDLLAAIRMGIQLKKV). A Phosphotyrosine; by ABL1 modification is found at Tyr486.

Belongs to the SCAR/WAVE family. Binds actin and the Arp2/3 complex. In terms of processing, phosphorylation by ABL1 promotes lamellipodia formation and cell migration. As to expression, expressed in ovary and brain.

The protein resides in the cytoplasm. Its subcellular location is the cytoskeleton. Functionally, downstream effector molecules involved in the transmission of signals from tyrosine kinase receptors and small GTPases to the actin cytoskeleton. Plays a role in the regulation of cell morphology and cytoskeletal organization. Required in the control of cell shape. This chain is Actin-binding protein WASF3 (WASF3), found in Homo sapiens (Human).